The sequence spans 398 residues: Dual-specificity RNA methyltransferase RlmN (398 aa).

Glutamate 119 functions as the Proton acceptor in the catalytic mechanism. In terms of domain architecture, Radical SAM core spans 125 to 364 (EADRATLCVS…TIVRKTRGDD (240 aa)). The cysteines at positions 132 and 369 are disulfide-linked. Positions 139, 143, and 146 each coordinate [4Fe-4S] cluster. S-adenosyl-L-methionine-binding positions include 193-194 (GE), serine 225, 247-249 (SLH), and asparagine 326. The active-site S-methylcysteine intermediate is cysteine 369.

It belongs to the radical SAM superfamily. RlmN family. Requires [4Fe-4S] cluster as cofactor.

The protein localises to the cytoplasm. The catalysed reaction is adenosine(2503) in 23S rRNA + 2 reduced [2Fe-2S]-[ferredoxin] + 2 S-adenosyl-L-methionine = 2-methyladenosine(2503) in 23S rRNA + 5'-deoxyadenosine + L-methionine + 2 oxidized [2Fe-2S]-[ferredoxin] + S-adenosyl-L-homocysteine. It carries out the reaction adenosine(37) in tRNA + 2 reduced [2Fe-2S]-[ferredoxin] + 2 S-adenosyl-L-methionine = 2-methyladenosine(37) in tRNA + 5'-deoxyadenosine + L-methionine + 2 oxidized [2Fe-2S]-[ferredoxin] + S-adenosyl-L-homocysteine. Specifically methylates position 2 of adenine 2503 in 23S rRNA and position 2 of adenine 37 in tRNAs. m2A2503 modification seems to play a crucial role in the proofreading step occurring at the peptidyl transferase center and thus would serve to optimize ribosomal fidelity. The sequence is that of Dual-specificity RNA methyltransferase RlmN from Yersinia pseudotuberculosis serotype IB (strain PB1/+).